A 275-amino-acid polypeptide reads, in one-letter code: Bis(5'-nucleosyl)-tetraphosphatase, symmetrical (275 aa).

Belongs to the Ap4A hydrolase family.

It catalyses the reaction P(1),P(4)-bis(5'-adenosyl) tetraphosphate + H2O = 2 ADP + 2 H(+). In terms of biological role, hydrolyzes diadenosine 5',5'''-P1,P4-tetraphosphate to yield ADP. The chain is Bis(5'-nucleosyl)-tetraphosphatase, symmetrical (apaH) from Haemophilus influenzae (strain ATCC 51907 / DSM 11121 / KW20 / Rd).